Here is a 154-residue protein sequence, read N- to C-terminus: Protein X (154 aa).

Residues 68–117 (PCALRFTSARRMETTVNAHWNLPKVLHKRTLGLSAMSTTDLEAYFKDCVF) form a mitochondrial targeting sequence region.

The protein belongs to the orthohepadnavirus protein X family. In terms of assembly, may form homodimer. May interact with host CEBPA, CFLAR, CREB1, DDB1, E4F1, HBXIP, HSPD1/HSP60, NFKBIA, POLR2E and SMAD4. Interacts with host SMC5-SMC6 complex and induces its degradation. Interacts with host TRPC4AP; leading to prevent ubiquitination of TRPC4AP. Interacts with host PLSCR1; this interaction promotes ubiquitination and degradation of HBx and impairs HBx-mediated cell proliferation. In terms of processing, a fraction may be phosphorylated in insect cells and HepG2 cells, a human hepatoblastoma cell line. Phosphorylated in vitro by host protein kinase C or mitogen-activated protein kinase. N-acetylated in insect cells.

It is found in the host cytoplasm. The protein resides in the host nucleus. Its subcellular location is the host mitochondrion. In terms of biological role, multifunctional protein that plays a role in silencing host antiviral defenses and promoting viral transcription. Does not seem to be essential for HBV infection. May be directly involved in development of cirrhosis and liver cancer (hepatocellular carcinoma). Most of cytosolic activities involve modulation of cytosolic calcium. The effect on apoptosis is controversial depending on the cell types in which the studies have been conducted. May induce apoptosis by localizing in mitochondria and causing loss of mitochondrial membrane potential. May also modulate apoptosis by binding host CFLAR, a key regulator of the death-inducing signaling complex (DISC). Promotes viral transcription by using the host E3 ubiquitin ligase DDB1 to target the SMC5-SMC6 complex to proteasomal degradation. This host complex would otherwise bind to viral episomal DNA, and prevents its transcription. Moderately stimulates transcription of many different viral and cellular transcription elements. Promoters and enhancers stimulated by HBx contain DNA binding sites for NF-kappa-B, AP-1, AP-2, c-EBP, ATF/CREB, or the calcium-activated factor NF-AT. In Hepatitis B virus genotype B2 (isolate Vietnam/9873/1997) (HBV-B), this protein is Protein X.